Reading from the N-terminus, the 477-residue chain is Aspartyl/glutamyl-tRNA(Asn/Gln) amidotransferase subunit B (477 aa).

It belongs to the GatB/GatE family. GatB subfamily. As to quaternary structure, heterotrimer of A, B and C subunits.

It catalyses the reaction L-glutamyl-tRNA(Gln) + L-glutamine + ATP + H2O = L-glutaminyl-tRNA(Gln) + L-glutamate + ADP + phosphate + H(+). The catalysed reaction is L-aspartyl-tRNA(Asn) + L-glutamine + ATP + H2O = L-asparaginyl-tRNA(Asn) + L-glutamate + ADP + phosphate + 2 H(+). In terms of biological role, allows the formation of correctly charged Asn-tRNA(Asn) or Gln-tRNA(Gln) through the transamidation of misacylated Asp-tRNA(Asn) or Glu-tRNA(Gln) in organisms which lack either or both of asparaginyl-tRNA or glutaminyl-tRNA synthetases. The reaction takes place in the presence of glutamine and ATP through an activated phospho-Asp-tRNA(Asn) or phospho-Glu-tRNA(Gln). The chain is Aspartyl/glutamyl-tRNA(Asn/Gln) amidotransferase subunit B from Coxiella burnetii (strain CbuG_Q212) (Coxiella burnetii (strain Q212)).